The primary structure comprises 329 residues: Delta(7)-sterol 5(6)-desaturase erg32 (329 aa).

Helical transmembrane passes span Leu-67 to Tyr-87 and Phe-149 to Ile-169. The Fatty acid hydroxylase domain maps to Ala-156–Ser-281. A Histidine box-1 motif is present at residues His-170–His-175. A Histidine box-2 motif is present at residues His-183–His-187. A helical membrane pass occupies residues Leu-210 to Phe-230. The short motif at His-257–His-262 is the Histidine box-3 element.

It belongs to the sterol desaturase family. Fe cation is required as a cofactor.

It is found in the endoplasmic reticulum membrane. Its subcellular location is the golgi apparatus membrane. The enzyme catalyses episterol + 2 Fe(II)-[cytochrome b5] + O2 + 2 H(+) = 5-dehydroepisterol + 2 Fe(III)-[cytochrome b5] + 2 H2O. It participates in steroid metabolism; ergosterol biosynthesis. Its function is as follows. C-5 sterol desaturase; part of the third module of ergosterol biosynthesis pathway that includes by the late steps of the pathway. Erg31 and erg32 catalyze the introduction of a C-5 double bond in the B ring to produce 5-dehydroepisterol. The third module or late pathway involves the ergosterol synthesis itself through consecutive reactions that mainly occur in the endoplasmic reticulum (ER) membrane. Firstly, the squalene synthase erg9 catalyzes the condensation of 2 farnesyl pyrophosphate moieties to form squalene, which is the precursor of all steroids. Secondly, squalene is converted into lanosterol by the consecutive action of the squalene epoxidase erg1 and the lanosterol synthase erg7. The lanosterol 14-alpha-demethylase erg11/cyp1 catalyzes C14-demethylation of lanosterol to produce 4,4'-dimethyl cholesta-8,14,24-triene-3-beta-ol. In the next steps, a complex process involving various demethylation, reduction and desaturation reactions catalyzed by the C-14 reductase erg24 and the C-4 demethylation complex erg25-erg26-erg27 leads to the production of zymosterol. Erg28 likely functions in the C-4 demethylation complex reaction by tethering erg26 and Erg27 to the endoplasmic reticulum or to facilitate interaction between these proteins. Then, the sterol 24-C-methyltransferase erg6 catalyzes the methyl transfer from S-adenosyl-methionine to the C-24 of zymosterol to form fecosterol. The C-8 sterol isomerase erg2 catalyzes the reaction which results in unsaturation at C-7 in the B ring of sterols and thus converts fecosterol to episterol. The sterol-C5-desaturases erg31 and erg32 then catalyze the introduction of a C-5 double bond in the B ring to produce 5-dehydroepisterol. The C-22 sterol desaturase erg5 further converts 5-dehydroepisterol into ergosta-5,7,22,24(28)-tetraen-3beta-ol by forming the C-22(23) double bond in the sterol side chain. Finally, ergosta-5,7,22,24(28)-tetraen-3beta-ol is substrate of the C-24(28) sterol reductase erg4 to produce ergosterol. In the genus Schizosaccharomyces, a second route exists between lanosterol and fecosterol, via the methylation of lanosterol to eburicol by erg6, followed by C14-demethylation by erg11/cyp1 and C4-demethylation by the demethylation complex erg25-erg26-erg27. This Schizosaccharomyces pombe (strain 972 / ATCC 24843) (Fission yeast) protein is Delta(7)-sterol 5(6)-desaturase erg32.